Consider the following 93-residue polypeptide: Guanine nucleotide-binding protein subunit gamma 1 (93 aa).

Residues 12–52 (TRGRHRIQAELKKLEQEARFLEEELEELDKTDKVSAALQEL) adopt a coiled-coil conformation. In terms of domain architecture, G protein gamma spans 20 to 93 (AELKKLEQEA…DLRRCKCWFL (74 aa)). Cys-88 carries the S-palmitoyl cysteine lipid modification. At Cys-90 the chain carries Cysteine methyl ester. A lipid anchor (S-farnesyl cysteine) is attached at Cys-90. A propeptide spans 91–93 (WFL) (removed in mature form).

G proteins are composed of 3 units, alpha, beta and gamma. Interacts with the beta subunit RGB1.

The protein localises to the cell membrane. In terms of biological role, guanine nucleotide-binding proteins (G proteins) are involved as modulators or transducers in various transmembrane signaling systems. The sequence is that of Guanine nucleotide-binding protein subunit gamma 1 from Oryza sativa subsp. indica (Rice).